The primary structure comprises 122 residues: Phosphoribosyl-ATP pyrophosphatase (122 aa).

This sequence belongs to the PRA-PH family.

It localises to the cytoplasm. It carries out the reaction 1-(5-phospho-beta-D-ribosyl)-ATP + H2O = 1-(5-phospho-beta-D-ribosyl)-5'-AMP + diphosphate + H(+). It functions in the pathway amino-acid biosynthesis; L-histidine biosynthesis; L-histidine from 5-phospho-alpha-D-ribose 1-diphosphate: step 2/9. In Burkholderia thailandensis (strain ATCC 700388 / DSM 13276 / CCUG 48851 / CIP 106301 / E264), this protein is Phosphoribosyl-ATP pyrophosphatase.